Consider the following 275-residue polypeptide: Thymidylate synthase (275 aa).

138 to 139 contacts dUMP; the sequence is RR. Catalysis depends on Cys-158, which acts as the Nucleophile. Residues 178-181, Asn-189, and 219-221 each bind dUMP; these read RSCD and HIY. Asp-181 is a (6R)-5,10-methylene-5,6,7,8-tetrahydrofolate binding site. Ala-274 lines the (6R)-5,10-methylene-5,6,7,8-tetrahydrofolate pocket.

Belongs to the thymidylate synthase family. Bacterial-type ThyA subfamily. Homodimer.

The protein localises to the cytoplasm. The catalysed reaction is dUMP + (6R)-5,10-methylene-5,6,7,8-tetrahydrofolate = 7,8-dihydrofolate + dTMP. It participates in pyrimidine metabolism; dTTP biosynthesis. Its function is as follows. Catalyzes the reductive methylation of 2'-deoxyuridine-5'-monophosphate (dUMP) to 2'-deoxythymidine-5'-monophosphate (dTMP) while utilizing 5,10-methylenetetrahydrofolate (mTHF) as the methyl donor and reductant in the reaction, yielding dihydrofolate (DHF) as a by-product. This enzymatic reaction provides an intracellular de novo source of dTMP, an essential precursor for DNA biosynthesis. This Fusobacterium nucleatum subsp. nucleatum (strain ATCC 25586 / DSM 15643 / BCRC 10681 / CIP 101130 / JCM 8532 / KCTC 2640 / LMG 13131 / VPI 4355) protein is Thymidylate synthase.